A 343-amino-acid polypeptide reads, in one-letter code: Methionine import ATP-binding protein MetN (343 aa).

The 240-residue stretch at 2-241 (IKLSNITKVF…PKTPLAQKFI (240 aa)) folds into the ABC transporter domain. Residue 38 to 45 (GASGAGKS) coordinates ATP.

Belongs to the ABC transporter superfamily. Methionine importer (TC 3.A.1.24) family. As to quaternary structure, the complex is composed of two ATP-binding proteins (MetN), two transmembrane proteins (MetI) and a solute-binding protein (MetQ).

It localises to the cell inner membrane. The enzyme catalyses L-methionine(out) + ATP + H2O = L-methionine(in) + ADP + phosphate + H(+). It carries out the reaction D-methionine(out) + ATP + H2O = D-methionine(in) + ADP + phosphate + H(+). Part of the ABC transporter complex MetNIQ involved in methionine import. Responsible for energy coupling to the transport system. This is Methionine import ATP-binding protein MetN from Shigella boydii serotype 4 (strain Sb227).